The primary structure comprises 173 residues: MENIIARRYAKAIASRADINDFYQNLCILNSAFVLPKFKNIIESNEIKKERKMEFLDSFFHIKNSSFQNFLRLLIENSRLECIPQIVKELERQKAFKENIFVGIVHSKEKLSQENLKDLEVKLNKKFNANIKLNNKISQDDSVKIELEELGYELSFSMKALQNKLNEYVLKII.

It belongs to the ATPase delta chain family. In terms of assembly, F-type ATPases have 2 components, F(1) - the catalytic core - and F(0) - the membrane proton channel. F(1) has five subunits: alpha(3), beta(3), gamma(1), delta(1), epsilon(1). F(0) has three main subunits: a(1), b(2) and c(10-14). The alpha and beta chains form an alternating ring which encloses part of the gamma chain. F(1) is attached to F(0) by a central stalk formed by the gamma and epsilon chains, while a peripheral stalk is formed by the delta and b chains.

It localises to the cell inner membrane. F(1)F(0) ATP synthase produces ATP from ADP in the presence of a proton or sodium gradient. F-type ATPases consist of two structural domains, F(1) containing the extramembraneous catalytic core and F(0) containing the membrane proton channel, linked together by a central stalk and a peripheral stalk. During catalysis, ATP synthesis in the catalytic domain of F(1) is coupled via a rotary mechanism of the central stalk subunits to proton translocation. Functionally, this protein is part of the stalk that links CF(0) to CF(1). It either transmits conformational changes from CF(0) to CF(1) or is implicated in proton conduction. This is ATP synthase subunit delta from Campylobacter jejuni subsp. doylei (strain ATCC BAA-1458 / RM4099 / 269.97).